Consider the following 164-residue polypeptide: Single-stranded DNA-binding protein 2 (164 aa).

An SSB domain is found at 5–109 (INKVILVGNL…IVADEMQMLG (105 aa)). The tract at residues 105-164 (MQMLGGRSDGGGMGGGGERPQRQTSQRQDYAPRRQARQPSQSPQSSPPPMDDFADDDIPF) is disordered. The span at 111–122 (RSDGGGMGGGGE) shows a compositional bias: gly residues. The Important for interaction with partner proteins motif lies at 159-164 (DDDIPF).

In terms of assembly, homotetramer.

Its function is as follows. Plays an important role in DNA replication, recombination and repair. Binds to ssDNA and to an array of partner proteins to recruit them to their sites of action during DNA metabolism. The polypeptide is Single-stranded DNA-binding protein 2 (ssb2) (Xylella fastidiosa (strain 9a5c)).